A 278-amino-acid chain; its full sequence is Putative transcription factor kapC (278 aa).

Residues 1-10 are compositionally biased toward pro residues; that stretch reads MQPALAPAPH. Positions 1–121 are disordered; sequence MQPALAPAPH…QNRAAQRAFR (121 aa). The segment covering 56-68 has biased composition (polar residues); that stretch reads PTATTSPRDQNNI. Residues 103–166 form the bZIP domain; sequence PLSTSKRAAQ…EYVINLQSRL (64 aa). The tract at residues 104-127 is basic motif; it reads LSTSKRAAQNRAAQRAFRQRKESY. Over residues 109-119 the composition is skewed to low complexity; the sequence is RAAQNRAAQRA. Residues 131-162 are leucine-zipper; sequence LEEQVKEYEVMSQEYKALQAENYQLREYVINL. The disordered stretch occupies residues 173 to 278; it reads VPELPGNIDL…PPTHGLPMVS (106 aa). Residues 198–214 show a composition bias toward low complexity; sequence PGQAGASAPPQGSPQSQ. Over residues 215-226 the composition is skewed to polar residues; the sequence is VSIANDDMNSLN. Basic and acidic residues predominate over residues 254-269; sequence GRGDETADPSETKTEP.

The protein belongs to the bZIP family.

The protein localises to the nucleus. In terms of biological role, putative transcription factor. The chain is Putative transcription factor kapC (kapC) from Emericella nidulans (strain FGSC A4 / ATCC 38163 / CBS 112.46 / NRRL 194 / M139) (Aspergillus nidulans).